Consider the following 222-residue polypeptide: Putative cobalt transport protein CbiM (222 aa).

Transmembrane regions (helical) follow at residues 8–28 (LPMEWAIVWYIISAIVVGYGI), 43–63 (PLLAISGAFMFVLSSLKLPSV), 75–95 (LGAILFGPAITSVLATIVLLF), 107–127 (TLGANIFSMGIMGPFVGYLVF), 134–154 (LNITWVVMLTAIFADWATYLT), and 178–198 (IFAITQIPLAIAEGLITALLW).

This sequence belongs to the CbiM family. As to quaternary structure, forms an energy-coupling factor (ECF) transporter complex composed of an ATP-binding protein (A component, CbiO), a transmembrane protein (T component, CbiQ) and 2 possible substrate-capture proteins (S components, CbiM and CbiN) of unknown stoichimetry.

It localises to the cell membrane. Its pathway is cofactor biosynthesis; adenosylcobalamin biosynthesis. Functionally, part of the energy-coupling factor (ECF) transporter complex CbiMNOQ involved in cobalt import. The polypeptide is Putative cobalt transport protein CbiM (Methanococcus voltae (strain ATCC BAA-1334 / A3)).